The primary structure comprises 265 residues: V0 assembly protein 1 (265 aa).

A signal peptide spans 1-24 (MVFGQLYALFIFTLSCCISKTVQA). Over 25–223 (DSSKESSSFI…ILSSIWTEGL (199 aa)) the chain is Vacuolar. 3 N-linked (GlcNAc...) asparagine glycosylation sites follow: Asn69, Asn104, and Asn172. Residues 224 to 244 (LMCLIVSALLLFILIVALSWI) traverse the membrane as a helical segment. The Cytoplasmic segment spans residues 245–265 (SNLDITYGALEKSTNPIKKNN). The short motif at 262-265 (KKNN) is the ER retention motif element.

The protein belongs to the VOA1 family. As to quaternary structure, V-ATPase is a heteromultimeric enzyme composed of a peripheral catalytic V1 complex (components A to H) attached to an integral membrane V0 proton pore complex (components: a, c, c', c'', d, e, f and VOA1). Interacts with VMA21. Associates with the assembling V0 complex.

Its subcellular location is the vacuole membrane. It localises to the endoplasmic reticulum membrane. Its function is as follows. Accessory component of the V0 complex of vacuolar(H+)-ATPase (V-ATPase), a multisubunit enzyme composed of a peripheral complex (V1) that hydrolyzes ATP and a membrane integral complex (V0) that translocates protons. V-ATPase is responsible for acidifying and maintaining the pH of intracellular compartments. Functions with VMA21 in assembly of the V0 complex. The chain is V0 assembly protein 1 (VOA1) from Saccharomyces cerevisiae (strain ATCC 204508 / S288c) (Baker's yeast).